Reading from the N-terminus, the 262-residue chain is MIDKTAVIHPSSIVEEGAVIGAGVHIGPFCFVGSQVEIGAGTELKSHVVVNGITKIGCDNQIYQFASIGEANQDLKYAGEPTRVEIGDRNRIRESVSIHRGTVQGGGLTKVGSDNLLMINAHIAHDCIIGDRCILANNATLGGHVEIDDFAIIGGMTAIHQFCVIGAHVMVGGCSGVAQDVPPFVIAQGNHATPFGINIEGLKRRGFDKESLHAIRNAYKLLYRSGRTLDEVKPEIAELAEQHSAVQAFIDFFARSTRGIIR.

Belongs to the transferase hexapeptide repeat family. LpxA subfamily. As to quaternary structure, homotrimer.

It localises to the cytoplasm. The enzyme catalyses a (3R)-hydroxyacyl-[ACP] + UDP-N-acetyl-alpha-D-glucosamine = a UDP-3-O-[(3R)-3-hydroxyacyl]-N-acetyl-alpha-D-glucosamine + holo-[ACP]. It participates in glycolipid biosynthesis; lipid IV(A) biosynthesis; lipid IV(A) from (3R)-3-hydroxytetradecanoyl-[acyl-carrier-protein] and UDP-N-acetyl-alpha-D-glucosamine: step 1/6. Functionally, involved in the biosynthesis of lipid A, a phosphorylated glycolipid that anchors the lipopolysaccharide to the outer membrane of the cell. The protein is Acyl-[acyl-carrier-protein]--UDP-N-acetylglucosamine O-acyltransferase of Yersinia enterocolitica serotype O:8 / biotype 1B (strain NCTC 13174 / 8081).